Here is a 429-residue protein sequence, read N- to C-terminus: MPIRIDSRNADFVPRFKAFLATKREVSADIEAATRAIVDDVAARGDAALIEATCKFDRLSVDAAGLRFTAAEIDAAVAACDAATLDALKLARDRIETFHRRQLPKDDRFIDALGVELGSRWTAIEAVGLYVPGGSAAYPSSVLMNAVPAMVAGVARVVMVVPSPAGRINPLVLAAARLGGVSEIYRVGGAQAVAALAYGTATIAPVAKIVGPGNAYVAAAKRQVFGKVGIDMIAGPSEVLVIADQTGNAGWIAADLLAQAEHDANAQSILITDSEALAADVERAVETQLATLPRAGIARASWNDFGAVILVTDLDEAVVLADSIAAEHLEIMTADPEGLAARIRNAGAIFLGPHTPEAIGDYVGGSNHVLPTARSARFSSGLGVLDFMKRTSILKCGPDQLRALGPAAMTLGKAEGLDAHARSVGVRLN.

Positions 130, 191, and 214 each coordinate NAD(+). Substrate-binding residues include Ser237, Gln259, and His262. Gln259 and His262 together coordinate Zn(2+). Active-site proton acceptor residues include Glu327 and His328. Substrate contacts are provided by His328, Asp361, Glu415, and His420. A Zn(2+)-binding site is contributed by Asp361. His420 provides a ligand contact to Zn(2+).

The protein belongs to the histidinol dehydrogenase family. It depends on Zn(2+) as a cofactor.

The catalysed reaction is L-histidinol + 2 NAD(+) + H2O = L-histidine + 2 NADH + 3 H(+). Its pathway is amino-acid biosynthesis; L-histidine biosynthesis; L-histidine from 5-phospho-alpha-D-ribose 1-diphosphate: step 9/9. Functionally, catalyzes the sequential NAD-dependent oxidations of L-histidinol to L-histidinaldehyde and then to L-histidine. The polypeptide is Histidinol dehydrogenase (Nitrobacter winogradskyi (strain ATCC 25391 / DSM 10237 / CIP 104748 / NCIMB 11846 / Nb-255)).